The sequence spans 2159 residues: Calpain-type cysteine protease DEK1 (2159 aa).

The signal sequence occupies residues 1 to 33; that stretch reads MEGEGHHGVVLACSICGFLFAVLSPFSFWVLWA. The Extracellular segment spans residues 34 to 70; the sequence is VNWRPWRLYSWIYARKWPTYVQGPQLSTLCSLLTLCA. A helical transmembrane segment spans residues 71–91; sequence WLVVISPIAVLLVWGSVLIAL. At 92 to 95 the chain is on the cytoplasmic side; the sequence is MERN. Residues 96-116 form a helical membrane-spanning segment; the sequence is IIGLAVIMAGVALLLSFYSIM. The Extracellular portion of the chain corresponds to 117–127; the sequence is LWWRTQWQSSE. Residues 128-148 form a helical membrane-spanning segment; it reads AVAYLLLLAVCLLCAYDFCAI. The Cytoplasmic portion of the chain corresponds to 149–164; that stretch reads YVTAGASASELNSPSG. A helical membrane pass occupies residues 165–185; it reads FFFGVSVISLAINMLFICKIL. The Extracellular portion of the chain corresponds to 186-236; the sequence is FNVSGFDVDEYVRRSYKFAYSDCVEVAPVSCSPEPPDPSELYMTKSSRVKH. A helical membrane pass occupies residues 237 to 257; it reads LGLLYISSLLVLVGYSILYGL. The Cytoplasmic segment spans residues 258 to 264; that stretch reads TSKEARW. A helical membrane pass occupies residues 265–285; it reads LGALTSVAVVILDWNLGLCSF. Topologically, residues 286-294 are extracellular; the sequence is RFELLKSRM. A helical membrane pass occupies residues 295–315; that stretch reads IVLFVAGTSRAFLVSFGVHYW. The Cytoplasmic segment spans residues 316–320; it reads YLGHC. A helical transmembrane segment spans residues 321–341; the sequence is ISYAFVASVLLSAAVSSWLSI. The Extracellular segment spans residues 342–623; that stretch reads SNPSVARIDA…LIFHHLAGSP (282 aa). The segment at 365-409 is disordered; that stretch reads RKGQNSSSNSSEGCGSSVKRSSGSVEAGQNGNAMDSMYRSNSQSD. The segment covering 369–381 has biased composition (low complexity); it reads NSSSNSSEGCGSS. Residues 382-409 show a composition bias toward polar residues; the sequence is VKRSSGSVEAGQNGNAMDSMYRSNSQSD. Residues 624–644 traverse the membrane as a helical segment; it reads IRAFIVFTVMFIIETATVAIY. The Cytoplasmic portion of the chain corresponds to 645-660; sequence RPETIKVINATHEQFE. The helical transmembrane segment at 661 to 681 threads the bilayer; that stretch reads FGFSILLLSPVVCSIMAFIWS. Residues 682-694 lie on the Extracellular side of the membrane; the sequence is LRAEEMLMTSKPQ. Residues 695–715 traverse the membrane as a helical segment; the sequence is KYGFIAWLLSTCVGLFLSFLS. At 716–719 the chain is on the cytoplasmic side; sequence KSSV. A helical membrane pass occupies residues 720-740; it reads ILGLSLTVPLMVACLSFAVPI. The Extracellular segment spans residues 741 to 770; sequence WIRNGYSFWIPGREFANRENVSQAPGEKER. A helical transmembrane segment spans residues 771–791; the sequence is ALFVITIAVFTASIIGLGAIV. Residues 792–822 are Cytoplasmic-facing; it reads SAKPLDALGYKGWDADKNSSYSPYATSMYLG. The chain crosses the membrane as a helical span at residues 823–843; that stretch reads WALSSTIAVITTGLIPIVAWF. At 844-853 the chain is on the extracellular side; the sequence is ATYRFSPSSA. The helical transmembrane segment at 854-874 threads the bilayer; sequence ICVGLFATVLVSFCGASYWGV. Topologically, residues 875 to 887 are cytoplasmic; that stretch reads VNSREDGVPLKAD. The chain crosses the membrane as a helical span at residues 888–908; that stretch reads FLAALLPLLCIPAFFSLFTGL. The Extracellular segment spans residues 909-921; it reads YKWKDDDWKISRG. Residues 922-942 traverse the membrane as a helical segment; it reads VYLFVGMGMLLLFGAVAAVIV. Residues 943-946 are Cytoplasmic-facing; the sequence is TIRP. The chain crosses the membrane as a helical span at residues 947 to 967; sequence WTVGVACLVAILFLVFVIGVI. Residues 968–981 are Extracellular-facing; it reads HYWTSNNFYLTRTQ. Residues 982–1002 form a helical membrane-spanning segment; that stretch reads MLLVCSIAFLLALAAFLMGLF. Topologically, residues 1003-1016 are cytoplasmic; the sequence is HGKPFVGASIGYFS. A helical membrane pass occupies residues 1017 to 1037; that stretch reads FIFLLTGRALTVLLSPPIVVY. Topologically, residues 1038–1060 are extracellular; that stretch reads SPRVLPVYVYDAHADSAKNVSYA. A helical membrane pass occupies residues 1061 to 1081; the sequence is FLILYGIALATEVWGVIASLI. Residues 1082–2159 lie on the Cytoplasmic side of the membrane; the sequence is MNPPFVGAGV…SKASIRLEAV (1078 aa). 2 positions are modified to phosphoserine: Ser1371 and Ser1376. The region spanning 1417-1609 is the Calpain catalytic 1 domain; sequence TGRHCGELDL…MSPAEYGFFD (193 aa). Position 1665 is a phosphoserine (Ser1665). The Calpain catalytic 2 domain maps to 1703–2005; sequence NFTDQEFPPE…FRSIYVCRVY (303 aa). Active-site residues include Cys1769, His1927, and Asn1947.

This sequence belongs to the peptidase C2 family. In terms of processing, autocatalytic proteolytic cleavage leading to the production of mainly cytoplasmic localized subproducts of about 85 and 120 kDa. As to expression, expressed in most tissues at low levels ranging from 30 to 55 ppm. Present in all endosperm cells at transcript level, but confined to aleurones at protein level.

It is found in the endoplasmic reticulum membrane. The protein resides in the cytoplasm. Its subcellular location is the cell membrane. It localises to the endosome membrane. Its function is as follows. Essential protease involved in epiderm development. Required for aleurone cell development in the endosperm probably by maintaining and restricting the aleurone and embryonic epidermal L1 cell-layer fates as well as meristems organization. Involved in the maintenance of adaxial/abaxial axis information in developing leaves, probably by regulating cell proliferation and expansion. Does not need calcium ions to be active. In Zea mays (Maize), this protein is Calpain-type cysteine protease DEK1 (DEK1).